A 101-amino-acid polypeptide reads, in one-letter code: Protein S100-A7A (101 aa).

2 consecutive EF-hand domains span residues 13 to 48 and 50 to 85; these read MIDM…SACD and KGIH…IAAD. 3 residues coordinate Zn(2+): H18, E28, and E38. Ca(2+)-binding residues include D63 and N65. A Zn(2+)-binding site is contributed by E66. Residues D67, K69, and E74 each contribute to the Ca(2+) site. 2 residues coordinate Zn(2+): H87 and H91.

The protein belongs to the S-100 family. In terms of tissue distribution, overexpressed in psoriasis.

It localises to the cytoplasm. Functionally, may be involved in epidermal differentiation and inflammation and might therefore be important for the pathogenesis of psoriasis and other diseases. The chain is Protein S100-A7A (S100A7A) from Homo sapiens (Human).